We begin with the raw amino-acid sequence, 959 residues long: Protein NLP7 (959 aa).

The tract at residues 1–22 (MCEPDDNSARNGVTTQPSRSRE) is disordered. Positions 9-18 (ARNGVTTQPS) are enriched in polar residues. In terms of domain architecture, RWP-RK spans 578 to 659 (KKKTEKKRGK…IESVQGTDGG (82 aa)). Residues 633-654 (SRKIKKVNRSITKLKRVIESVQ) adopt a coiled-coil conformation. 3 stretches are compositionally biased toward polar residues: residues 673–687 (THGQ…SPNG), 694–703 (PNTNNSPNHW), and 735–745 (GTPTSHGSCDG). Positions 673–760 (THGQTSAQPL…PKVPNQDPLF (88 aa)) are disordered. The 83-residue stretch at 863–945 (TVTIKASYKD…KIVRLLVHDV (83 aa)) folds into the PB1 domain.

In terms of assembly, interacts with NRG2. In terms of tissue distribution, expressed in roots, stems, leaves, flowers and siliques. Detected in root hairs, emerging secondary roots, vascular tissues, leaf parenchyma cells and stomata.

It is found in the nucleus. Its function is as follows. Transcription factor involved in regulation of nitrate assimilation and in transduction of the nitrate signal. In Arabidopsis thaliana (Mouse-ear cress), this protein is Protein NLP7 (NLP7).